The following is a 237-amino-acid chain: LexA repressor (237 aa).

The H-T-H motif DNA-binding region spans 26–46 (FDEMKDALDLRSKSGIHRLIT). Residues Ser158 and Lys196 each act as for autocatalytic cleavage activity in the active site.

Belongs to the peptidase S24 family. As to quaternary structure, homodimer.

The catalysed reaction is Hydrolysis of Ala-|-Gly bond in repressor LexA.. Represses a number of genes involved in the response to DNA damage (SOS response), including recA and lexA. In the presence of single-stranded DNA, RecA interacts with LexA causing an autocatalytic cleavage which disrupts the DNA-binding part of LexA, leading to derepression of the SOS regulon and eventually DNA repair. The chain is LexA repressor from Rhodopseudomonas palustris (strain BisA53).